The primary structure comprises 344 residues: MAALITQEIGSFRKPEYLSMEFHKIEGTEKFKELAERATIDTLKIFENTGLDNVGIGGEMYRWEMYEHPAERIKGLIFYGMVRSFDNRYYRKGSVIDKIERRGSFHMDEVEFVAKSTKKPIKIPITGPYTMMDWSFNDHYNDRHELAMEFARIINEELKEIQSKWPYISNGRKLEIQIDEPATTTHPDEMDIVVDSVNKSIEGIDAELSLHVCYSRDYRLLYDRIPELNIDGYNLEYSNRDTTDLGVEDAKRPGFQDIKYFNEVNESLQRKKFIGVGVTDVHIDFIEPVKLIEDRIKYVLNIIKDPELVKLNPDCGLRTRSRSIGEQKLRNMVIAKNNVLKDIS.

Zn(2+) contacts are provided by histidine 211, cysteine 213, glutamate 236, and cysteine 315.

The protein belongs to the archaeal MetE family. Requires Zn(2+) as cofactor.

The protein operates within amino-acid biosynthesis; L-methionine biosynthesis via de novo pathway. Catalyzes the transfer of a methyl group to L-homocysteine resulting in methionine formation. The physiological methyl donor is unknown. The protein is Methionine synthase of Thermoplasma volcanium (strain ATCC 51530 / DSM 4299 / JCM 9571 / NBRC 15438 / GSS1).